A 496-amino-acid polypeptide reads, in one-letter code: Probable cytosol aminopeptidase (496 aa).

Positions 257 and 262 each coordinate Mn(2+). K269 is an active-site residue. Residues D281, D341, and E343 each coordinate Mn(2+). Residue R345 is part of the active site.

It belongs to the peptidase M17 family. Mn(2+) serves as cofactor.

Its subcellular location is the cytoplasm. It catalyses the reaction Release of an N-terminal amino acid, Xaa-|-Yaa-, in which Xaa is preferably Leu, but may be other amino acids including Pro although not Arg or Lys, and Yaa may be Pro. Amino acid amides and methyl esters are also readily hydrolyzed, but rates on arylamides are exceedingly low.. The catalysed reaction is Release of an N-terminal amino acid, preferentially leucine, but not glutamic or aspartic acids.. Presumably involved in the processing and regular turnover of intracellular proteins. Catalyzes the removal of unsubstituted N-terminal amino acids from various peptides. In Synechococcus sp. (strain CC9311), this protein is Probable cytosol aminopeptidase.